Consider the following 119-residue polypeptide: UPF0342 protein GK0640 (119 aa).

This sequence belongs to the UPF0342 family.

The protein is UPF0342 protein GK0640 of Geobacillus kaustophilus (strain HTA426).